A 394-amino-acid polypeptide reads, in one-letter code: Ribulose bisphosphate carboxylase large chain (394 aa).

Position 5 is an N6,N6,N6-trimethyllysine (K5). Residues N114 and T164 each contribute to the substrate site. The active-site Proton acceptor is K166. K168 is a substrate binding site. The Mg(2+) site is built by K192, D194, and E195. Position 192 is an N6-carboxylysine (K192). Residue H285 is the Proton acceptor of the active site. R286, H318, and S370 together coordinate substrate.

Belongs to the RuBisCO large chain family. Type I subfamily. Heterohexadecamer of 8 large chains and 8 small chains; disulfide-linked. The disulfide link is formed within the large subunit homodimers. It depends on Mg(2+) as a cofactor. The disulfide bond which can form in the large chain dimeric partners within the hexadecamer appears to be associated with oxidative stress and protein turnover.

The protein localises to the plastid. The protein resides in the chloroplast. The enzyme catalyses 2 (2R)-3-phosphoglycerate + 2 H(+) = D-ribulose 1,5-bisphosphate + CO2 + H2O. The catalysed reaction is D-ribulose 1,5-bisphosphate + O2 = 2-phosphoglycolate + (2R)-3-phosphoglycerate + 2 H(+). In terms of biological role, ruBisCO catalyzes two reactions: the carboxylation of D-ribulose 1,5-bisphosphate, the primary event in carbon dioxide fixation, as well as the oxidative fragmentation of the pentose substrate in the photorespiration process. Both reactions occur simultaneously and in competition at the same active site. This Nelumbo lutea (American lotus) protein is Ribulose bisphosphate carboxylase large chain (rbcL).